Reading from the N-terminus, the 2517-residue chain is Non-reducing polyketide synthase pkbA (2517 aa).

An N-terminal acylcarrier protein transacylase domain (SAT) region spans residues 59 to 250 (LERVAGPAEK…KRFDLRGRFH (192 aa)). Residues 380 to 775 (SEPIAIIGMG…SANTVSSLKE (396 aa)) enclose the Ketosynthase family 3 (KS3) domain. Active-site for beta-ketoacyl synthase activity residues include cysteine 547, histidine 682, and histidine 721. Positions 849 to 1158 (AFGGQVARSV…TGTAALADAT (310 aa)) are malonyl-CoA:ACP transacylase (MAT) domain. Residue serine 935 is the For acyl/malonyl transferase activity of the active site. Residues 1221–1353 (EEFLTFVKYK…GTVVLRENDT (133 aa)) are N-terminal hotdog fold. Residues 1221–1530 (EEFLTFVKYK…FTRVQISSLG (310 aa)) enclose the PKS/mFAS DH domain. Residues 1251 to 1525 (FVKGHAVLAE…ILGAHFTRVQ (275 aa)) are product template (PT) domain. The Proton acceptor; for dehydratase activity role is filled by histidine 1255. Residues 1379-1530 (DCHILQGPVV…FTRVQISSLG (152 aa)) are C-terminal hotdog fold. Aspartate 1437 (proton donor; for dehydratase activity) is an active-site residue. One can recognise a Carrier 1 domain in the interval 1574–1651 (RPTLEISEKL…SISKCLASYL (78 aa)). At serine 1611 the chain carries O-(pantetheine 4'-phosphoryl)serine. The tract at residues 1659–1684 (QPEDLADADSVESDSDMPTGAVTSGI) is disordered. The span at 1662 to 1673 (DLADADSVESDS) shows a compositional bias: acidic residues. Residues 1685–1761 (TTPDDAVSRL…DLIALVPALN (77 aa)) enclose the Carrier 2 domain. O-(pantetheine 4'-phosphoryl)serine is present on serine 1721. A methyltransferase (CMeT) domain region spans residues 1976–2075 (LELGGGTGGT…IHRMLRPDGF (100 aa)). Residues 2200–2514 (LMIHGGGHIM…RGYDFLKEEV (315 aa)) are thioesterase (TE) domain.

The cofactor is pantetheine 4'-phosphate.

The enzyme catalyses 3 malonyl-CoA + acetyl-CoA + S-adenosyl-L-methionine + H(+) = 3-methylorsellinate + S-adenosyl-L-homocysteine + 3 CO2 + 4 CoA. Its pathway is phytotoxin biosynthesis. Non-reducing polyketide synthase; part of the gene cluster that mediates the biosynthesis of cichorine, a phytotoxin active against knapweed, corn, and soybeans. The first step in the pathway is performed by the non-reducing polyketide synthase pkbA that condenses one acetyl-CoA starter unit with 3 malonyl-CoA units. PkbA also catalyzes one methylation step to produce 3-methylorsellinate. The nonribosomal peptide synthase-like protein cicB, the cytochrome P450 monooxygenase cicH and the O-methyltransferase cicE are involved in the conversion of 3-methylorsellinate into nidulol. CicB converts 3-methylorsellinate to a yet unidentified intermediate, cicH may play a ring-closing role for cichorine and cicE is plausibly responsible for the methylation of one of the phenol groups. The oxidoreductase cicC acts downstream with still unidentified enzymes to further convert nidulol into cichorin. This chain is Non-reducing polyketide synthase pkbA, found in Emericella nidulans (strain FGSC A4 / ATCC 38163 / CBS 112.46 / NRRL 194 / M139) (Aspergillus nidulans).